The primary structure comprises 512 residues: Glutamyl-tRNA(Gln) amidotransferase subunit A (512 aa).

Residues K82 and S157 each act as charge relay system in the active site. S181 serves as the catalytic Acyl-ester intermediate.

Belongs to the amidase family. GatA subfamily. Heterotrimer of A, B and C subunits.

It carries out the reaction L-glutamyl-tRNA(Gln) + L-glutamine + ATP + H2O = L-glutaminyl-tRNA(Gln) + L-glutamate + ADP + phosphate + H(+). Functionally, allows the formation of correctly charged Gln-tRNA(Gln) through the transamidation of misacylated Glu-tRNA(Gln) in organisms which lack glutaminyl-tRNA synthetase. The reaction takes place in the presence of glutamine and ATP through an activated gamma-phospho-Glu-tRNA(Gln). The sequence is that of Glutamyl-tRNA(Gln) amidotransferase subunit A from Bordetella petrii (strain ATCC BAA-461 / DSM 12804 / CCUG 43448).